The following is a 173-amino-acid chain: RNA pyrophosphohydrolase (173 aa).

Positions 13–166 (PYRPCVGLMI…KRKVYEEVVA (154 aa)) constitute a Nudix hydrolase domain. A Nudix box motif is present at residues 54 to 75 (GGIDKGEEPLQAAERELYEETG).

This sequence belongs to the Nudix hydrolase family. RppH subfamily. A divalent metal cation is required as a cofactor.

Accelerates the degradation of transcripts by removing pyrophosphate from the 5'-end of triphosphorylated RNA, leading to a more labile monophosphorylated state that can stimulate subsequent ribonuclease cleavage. The polypeptide is RNA pyrophosphohydrolase (Mesorhizobium japonicum (strain LMG 29417 / CECT 9101 / MAFF 303099) (Mesorhizobium loti (strain MAFF 303099))).